Reading from the N-terminus, the 797-residue chain is MAALAYNLGKREINHYFSVRSAKVLALVAVLLLAACHLASRRYRGNDSCEYLLSSGRFLGEKVWQPHSCMMHKYKISEAKNCLVDKHIAFIGDSRIRQLFYSFVKIINPQFKEEGNKHENIPFEDKTASVKVDFLWHPEVNGSMKQCIKVWTEDSIAKPHVIVAGAATWSIKIHNGSSEALSQYKMNITSIAPLLEKLAKTSDVYWVLQDPVYEDLLSENRKMITNEKIDAYNEAAVSILNSSTRNSKSNVKMFSVSKLIAQETIMESLDGLHLPESSRETTAMILMNVYCNKILKPVDGSCCQPRPPVTLIQKLAACFFTLSIIGYLIFYIIHRNAHRKNKPCTDLESGEEKKNIINTPVSSLEILLQSFCKLGLIMAYFYMCDRANLFMKENKFYTHSSFFIPIIYILVLGVFYNENTKETKVLNREQTDEWKGWMQLVILIYHISGASTFLPVYMHIRVLVAAYLFQTGYGHFSYFWIKGDFGIYRVCQVLFRLNFLVVVLCIVMDRPYQFYYFVPLVTVWFMVIYVTLALWPQIIQKKANGNCFWHFGLLLKLGFLLLFICFLAYSQGAFEKIFSLWPLSKCFELKGNVYEWWFRWRLDRYVVFHGMLFAFIYLALQKRQILSEGKGEPLFSNKISNFLLFISVVSFLTYSIWASSCKNKAECNELHPSVSVVQILAFILIRNIPGYARSVYSSFFAWFGKISLELFICQYHIWLAADTRGILVLIPGNPMLNIIVSTFIFVCVAHEISQITNDLAQIIIPKDNSSLLKRLACIAAFFCGLLILSSIQDKSKH.

At M1–S18 the chain is on the cytoplasmic side. A helical transmembrane segment spans residues V19 to A39. At S40–Q313 the chain is on the lumenal side. The N-linked (GlcNAc...) asparagine glycan is linked to N46. S94 functions as the Acyl-ester intermediate in the catalytic mechanism. N-linked (GlcNAc...) asparagine glycosylation is found at N175 and N187. Residues D270 and H273 contribute to the active site. The chain crosses the membrane as a helical span at residues K314–H334. Residues R335–S363 lie on the Cytoplasmic side of the membrane. A helical transmembrane segment spans residues L364–C384. Topologically, residues D385–K395 are lumenal. The chain crosses the membrane as a helical span at residues F396 to Y416. Residues N417–Q439 lie on the Cytoplasmic side of the membrane. The chain crosses the membrane as a helical span at residues L440–I460. R461 is a topological domain (lumenal). A helical membrane pass occupies residues V462–K482. Over G483 to G486 the chain is Cytoplasmic. A helical membrane pass occupies residues I487–V507. Residues M508–Q513 are Lumenal-facing. Residues F514–L534 traverse the membrane as a helical segment. Over W535–C547 the chain is Cytoplasmic. A helical transmembrane segment spans residues F548 to A568. Residues Y569 to Y605 are Lumenal-facing. Residues V606 to L626 form a helical membrane-spanning segment. The Cytoplasmic segment spans residues S627–K638. Residues I639–S659 traverse the membrane as a helical segment. Residues S660 to H671 are Lumenal-facing. The chain crosses the membrane as a helical span at residues P672–A692. At R693 to S698 the chain is on the cytoplasmic side. The chain crosses the membrane as a helical span at residues F699 to L719. The Lumenal portion of the chain corresponds to A720–G725. Residues I726 to V746 traverse the membrane as a helical segment. Topologically, residues C747 to S770 are cytoplasmic. Residues L771–I791 traverse the membrane as a helical segment. Topologically, residues Q792–H797 are lumenal.

The protein belongs to the PC-esterase family. CASD1 subfamily. N-glycosylated. In terms of tissue distribution, highly expressed in peripheral B lymphocytes.

The protein localises to the golgi apparatus membrane. The catalysed reaction is CMP-N-acetyl-beta-neuraminate + acetyl-CoA = CMP-N-acetyl-9-O-acetyl-beta-neuraminate + CoA. The enzyme catalyses a ganglioside GD3 (d18:1(4E)) + acetyl-CoA = a ganglioside Ac-O-7-GD3(d18:1(4E)) + CoA. It carries out the reaction CMP-N-acetyl-beta-neuraminate + acetyl-CoA = CMP-N-acetyl-7-O-acetyl-beta-neuraminate + CoA. Its function is as follows. Key enzyme in the biosynthesis of O-acetylated (O-Ac) sialoglycans such as gangliosides O-AcGD3 and O-AcGD2, which affect various processes such as cell-cell interactions, host-pathogen recognition. Catalyzes the transfer of an acetyl group from a donor, the acetyl-coenzyme-A molecule (acetyl-CoA), to the C7/8/9 OH-position of a sialic acid residue. The primary site of O-acetyl group transfer on sialic acid seems to depend on cell type and can be C7, from which the O-acetyl group could subsequently migrate to the C8 and then to the C9 position, or at C9 with possibility of migrating to the C8 and then to the C7 position. Together with ST8SIA1 (GD3 synthase) it increases the levels of ganglioside Ac-O-7-GD3. Can transfer the acetyl group from acetyl-CoA to free sialate (N-acetylneuraminate, Neu5Ac) in vitro, but has preferred substrate specificity for CMP-activated sialate (CMP-Neu5Ac), resulting in the formation of 9-O-acetylated CMP-Neu5Ac (CMP-Neu5,9Ac2). CMP-Neu5,9Ac2 may be used by sialyltransferases as a sialate donor for glycoconjugate acceptors such as ganglioside GD3. O-acetylation at position C9 of ganglioside GD3 can counteract the pro-apoptotic effects of the ganglioside GD3 in tumor cells. The protein is N-acetylneuraminate (7)9-O-acetyltransferase of Homo sapiens (Human).